Consider the following 166-residue polypeptide: Small ribosomal subunit protein uS5 (166 aa).

The region spanning 11-74 (LIDKVVHISR…ESAKRTMFEV (64 aa)) is the S5 DRBM domain.

The protein belongs to the universal ribosomal protein uS5 family. Part of the 30S ribosomal subunit. Contacts proteins S4 and S8.

In terms of biological role, with S4 and S12 plays an important role in translational accuracy. Its function is as follows. Located at the back of the 30S subunit body where it stabilizes the conformation of the head with respect to the body. The polypeptide is Small ribosomal subunit protein uS5 (Syntrophobacter fumaroxidans (strain DSM 10017 / MPOB)).